The sequence spans 710 residues: PWWP domain-containing DNA repair factor 3A (710 aa).

The disordered stretch occupies residues 106 to 160 (QESSAGTGRADRSLRGKPMEHVSSPCDSNSSSLPRGDVLGSSRPHRRRPCVQQSL). Basic and acidic residues predominate over residues 114 to 125 (RADRSLRGKPME). The segment covering 128–137 (SSPCDSNSSS) has biased composition (low complexity). Serine 161 is subject to Phosphoserine. Disordered stretches follow at residues 177–204 (KKGLRKSENPRGPLVLPAGGGAQDESGS) and 230–398 (NGSS…EEPP). Low complexity predominate over residues 288-297 (PSACSEPGEC). Serine 374 and serine 375 each carry phosphoserine. Residues 375 to 385 (SEESMGSNSMR) show a composition bias toward polar residues. Residues 411-472 (VGMLVWHKHK…KHFDCKEKQT (62 aa)) form the PWWP domain.

The protein belongs to the PWWP3A family. In terms of assembly, interacts with TP53BP1 (via BRCT domain); the interaction is not dependent on its phosphorylation status. Binds nucleosomes. Interacts with trimethylated 'Lys-36' of histone H3 (H3K36me3) (in vitro).

The protein resides in the nucleus. In terms of biological role, involved in the DNA damage response pathway by contributing to the maintenance of chromatin architecture. Recruited to the vicinity of DNA breaks by TP53BP1 and plays an accessory role to facilitate damage-induced chromatin changes and promoting chromatin relaxation. Required for efficient DNA repair and cell survival following DNA damage. In Homo sapiens (Human), this protein is PWWP domain-containing DNA repair factor 3A.